The sequence spans 166 residues: Interferon gamma (166 aa).

A signal peptide spans 1 to 23 (MKYTSYFLALLLCGLLGFSGSYG). Gln-24 is modified (pyrrolidone carboxylic acid). Residues Asn-39 and Asn-106 are each glycosylated (N-linked (GlcNAc...) asparagine).

This sequence belongs to the type II (or gamma) interferon family. As to quaternary structure, homodimer. Interacts with IFNGR1 (via extracellular domain); this interaction promotes IFNGR1 dimerization. Released primarily from activated T lymphocytes.

The protein resides in the secreted. In terms of biological role, type II interferon produced by immune cells such as T-cells and NK cells that plays crucial roles in antimicrobial, antiviral, and antitumor responses by activating effector immune cells and enhancing antigen presentation. Primarily signals through the JAK-STAT pathway after interaction with its receptor IFNGR1 to affect gene regulation. Upon IFNG binding, IFNGR1 intracellular domain opens out to allow association of downstream signaling components JAK2, JAK1 and STAT1, leading to STAT1 activation, nuclear translocation and transcription of IFNG-regulated genes. Many of the induced genes are transcription factors such as IRF1 that are able to further drive regulation of a next wave of transcription. Plays a role in class I antigen presentation pathway by inducing a replacement of catalytic proteasome subunits with immunoproteasome subunits. In turn, increases the quantity, quality, and repertoire of peptides for class I MHC loading. Increases the efficiency of peptide generation also by inducing the expression of activator PA28 that associates with the proteasome and alters its proteolytic cleavage preference. Up-regulates as well MHC II complexes on the cell surface by promoting expression of several key molecules such as cathepsins B/CTSB, H/CTSH, and L/CTSL. Participates in the regulation of hematopoietic stem cells during development and under homeostatic conditions by affecting their development, quiescence, and differentiation. The protein is Interferon gamma (IFNG) of Bos taurus (Bovine).